Here is a 583-residue protein sequence, read N- to C-terminus: Thiol:disulfide interchange protein DsbD (583 aa).

The signal sequence occupies residues 1–20; sequence MLKRFIFLLVGITLTLSAHA. 2 disulfide bridges follow: Cys-123-Cys-128 and Cys-200-Cys-322. A run of 8 helical transmembrane segments spans residues 185 to 205, 237 to 257, 261 to 281, 302 to 322, 344 to 364, 375 to 395, 405 to 425, and 433 to 453; these read IFWF…LPML, LTYT…QVAL, PVLI…FGLF, GGAF…ASPC, GLAL…ITLF, WLLK…VFLL, PLMW…VIPT, and VRIV…NLVW. A Thioredoxin domain is found at 440–583; that stretch reads TFAVASYPWA…NQFLNWLNQL (144 aa). A disulfide bond links Cys-500 and Cys-503.

The protein belongs to the thioredoxin family. DsbD subfamily.

The protein resides in the cell inner membrane. The catalysed reaction is [protein]-dithiol + NAD(+) = [protein]-disulfide + NADH + H(+). It carries out the reaction [protein]-dithiol + NADP(+) = [protein]-disulfide + NADPH + H(+). Required to facilitate the formation of correct disulfide bonds in some periplasmic proteins and for the assembly of the periplasmic c-type cytochromes. Acts by transferring electrons from cytoplasmic thioredoxin to the periplasm. This transfer involves a cascade of disulfide bond formation and reduction steps. The polypeptide is Thiol:disulfide interchange protein DsbD (Actinobacillus pleuropneumoniae serotype 5b (strain L20)).